The primary structure comprises 81 residues: MESLGATVKEPGSTRKNKTGSWRTFKPFLDKDKCIDCDNCILFCPEGCIDKEHEIDYDYCKGCGICAEECPVKAIKMEREK.

The tract at residues 1–20 is disordered; the sequence is MESLGATVKEPGSTRKNKTG. 2 consecutive 4Fe-4S ferredoxin-type domains span residues 25–54 and 51–80; these read FKPF…KEHE and KEHE…MERE. 8 residues coordinate [4Fe-4S] cluster: C34, C37, C40, C44, C60, C63, C66, and C70.

As to quaternary structure, heterotetramer of one alpha, one beta, one delta and one gamma chain. [4Fe-4S] cluster is required as a cofactor.

This is Pyruvate synthase subunit PorD (porD) from Methanothermobacter marburgensis (strain ATCC BAA-927 / DSM 2133 / JCM 14651 / NBRC 100331 / OCM 82 / Marburg) (Methanobacterium thermoautotrophicum).